The following is a 178-amino-acid chain: CDP-archaeol synthase (178 aa).

The next 5 membrane-spanning stretches (helical) occupy residues I3–T23, T55–L75, G91–I111, I125–V145, and M149–Y169.

This sequence belongs to the CDP-archaeol synthase family. The cofactor is Mg(2+).

It is found in the cell membrane. The enzyme catalyses 2,3-bis-O-(geranylgeranyl)-sn-glycerol 1-phosphate + CTP + H(+) = CDP-2,3-bis-O-(geranylgeranyl)-sn-glycerol + diphosphate. It functions in the pathway membrane lipid metabolism; glycerophospholipid metabolism. Catalyzes the formation of CDP-2,3-bis-(O-geranylgeranyl)-sn-glycerol (CDP-archaeol) from 2,3-bis-(O-geranylgeranyl)-sn-glycerol 1-phosphate (DGGGP) and CTP. This reaction is the third ether-bond-formation step in the biosynthesis of archaeal membrane lipids. This chain is CDP-archaeol synthase, found in Methanococcus aeolicus (strain ATCC BAA-1280 / DSM 17508 / OCM 812 / Nankai-3).